Reading from the N-terminus, the 548-residue chain is T-complex protein 1 subunit theta (548 aa).

An N-acetylalanine modification is found at Ala2. Phosphoserine is present on Ser23. Phosphotyrosine is present on Tyr30. The ADP site is built by Tyr47 and Gly48. Asp99 contributes to the Mg(2+) binding site. Residues Gly100, Thr101, Asn102, and Phe103 each contribute to the ADP site. ATP is bound by residues Gly100, Thr101, and Asn102. A Phosphoserine modification is found at Ser162. Met169, Ser170, and Lys171 together coordinate ADP. The ATP site is built by Ser170 and Lys171. Position 213 is a phosphoserine (Ser213). Residues Lys224, Lys254, and Lys260 each participate in a glycyl lysine isopeptide (Lys-Gly) (interchain with G-Cter in SUMO2) cross-link. 2 positions are modified to phosphoserine: Ser269 and Ser317. N6-acetyllysine occurs at positions 318 and 400. Gly412 is an ADP binding site. Gly412 serves as a coordination point for ATP. Lys459 is covalently cross-linked (Glycyl lysine isopeptide (Lys-Gly) (interchain with G-Cter in SUMO1)). The residue at position 466 (Lys466) is an N6-acetyllysine. Asp499 is an ADP binding site. ATP contacts are provided by Asp499 and Lys504. A Phosphotyrosine modification is found at Tyr505. The tract at residues 529–548 (PAGGPKPPSGKKDWDDDQND) is disordered. Lys534 is covalently cross-linked (Glycyl lysine isopeptide (Lys-Gly) (interchain with G-Cter in SUMO2)). Ser537 is modified (phosphoserine). Lys539 participates in a covalent cross-link: Glycyl lysine isopeptide (Lys-Gly) (interchain with G-Cter in SUMO2).

This sequence belongs to the TCP-1 chaperonin family. As to quaternary structure, component of the chaperonin-containing T-complex (TRiC), a hexadecamer composed of two identical back-to-back stacked rings enclosing a protein folding chamber. Each ring is made up of eight different subunits: TCP1/CCT1, CCT2, CCT3, CCT4, CCT5, CCT6A/CCT6, CCT7, CCT8. Interacts with PACRG. Interacts with DNAAF4. Interacts with synaptic plasticity regulator PANTS.

Its subcellular location is the cytoplasm. The protein resides in the cytoskeleton. It is found in the microtubule organizing center. The protein localises to the centrosome. It localises to the cilium basal body. The catalysed reaction is ATP + H2O = ADP + phosphate + H(+). Its function is as follows. Component of the chaperonin-containing T-complex (TRiC), a molecular chaperone complex that assists the folding of actin, tubulin and other proteins upon ATP hydrolysis. The TRiC complex mediates the folding of WRAP53/TCAB1, thereby regulating telomere maintenance. As part of the TRiC complex may play a role in the assembly of BBSome, a complex involved in ciliogenesis regulating transports vesicles to the cilia. This is T-complex protein 1 subunit theta (CCT8) from Macaca fascicularis (Crab-eating macaque).